The sequence spans 471 residues: Uronate isomerase (471 aa).

Belongs to the metallo-dependent hydrolases superfamily. Uronate isomerase family.

It carries out the reaction D-glucuronate = D-fructuronate. The catalysed reaction is aldehydo-D-galacturonate = keto-D-tagaturonate. Its pathway is carbohydrate metabolism; pentose and glucuronate interconversion. This is Uronate isomerase from Latilactobacillus sakei subsp. sakei (strain 23K) (Lactobacillus sakei subsp. sakei).